The sequence spans 148 residues: Flavodoxin (148 aa).

Residues 4 to 145 enclose the Flavodoxin-like domain; that stretch reads VLIVYGSTTG…DVSAWAGRVV (142 aa).

It belongs to the flavodoxin family. FMN serves as cofactor.

Functionally, low-potential electron donor to a number of redox enzymes. In Nitratidesulfovibrio vulgaris (strain DSM 19637 / Miyazaki F) (Desulfovibrio vulgaris), this protein is Flavodoxin.